A 310-amino-acid chain; its full sequence is N-acetyl-gamma-glutamyl-phosphate reductase (310 aa).

Residue Cys-117 is part of the active site.

This sequence belongs to the NAGSA dehydrogenase family. Type 2 subfamily.

It localises to the cytoplasm. The enzyme catalyses N-acetyl-L-glutamate 5-semialdehyde + phosphate + NADP(+) = N-acetyl-L-glutamyl 5-phosphate + NADPH + H(+). The protein operates within amino-acid biosynthesis; L-arginine biosynthesis; N(2)-acetyl-L-ornithine from L-glutamate: step 3/4. Catalyzes the NADPH-dependent reduction of N-acetyl-5-glutamyl phosphate to yield N-acetyl-L-glutamate 5-semialdehyde. In Allorhizobium ampelinum (strain ATCC BAA-846 / DSM 112012 / S4) (Agrobacterium vitis (strain S4)), this protein is N-acetyl-gamma-glutamyl-phosphate reductase.